The chain runs to 148 residues: Large ribosomal subunit protein uL22 (148 aa).

It belongs to the universal ribosomal protein uL22 family. As to quaternary structure, part of the 50S ribosomal subunit.

This protein binds specifically to 23S rRNA; its binding is stimulated by other ribosomal proteins, e.g. L4, L17, and L20. It is important during the early stages of 50S assembly. It makes multiple contacts with different domains of the 23S rRNA in the assembled 50S subunit and ribosome. Its function is as follows. The globular domain of the protein is located near the polypeptide exit tunnel on the outside of the subunit, while an extended beta-hairpin is found that lines the wall of the exit tunnel in the center of the 70S ribosome. This is Large ribosomal subunit protein uL22 from Thermosipho africanus (strain TCF52B).